A 327-amino-acid polypeptide reads, in one-letter code: Phenylalanine--tRNA ligase alpha subunit (327 aa).

Glu252 contacts Mg(2+).

This sequence belongs to the class-II aminoacyl-tRNA synthetase family. Phe-tRNA synthetase alpha subunit type 1 subfamily. In terms of assembly, tetramer of two alpha and two beta subunits. Mg(2+) is required as a cofactor.

It is found in the cytoplasm. The enzyme catalyses tRNA(Phe) + L-phenylalanine + ATP = L-phenylalanyl-tRNA(Phe) + AMP + diphosphate + H(+). This is Phenylalanine--tRNA ligase alpha subunit from Shigella dysenteriae serotype 1 (strain Sd197).